Here is a 497-residue protein sequence, read N- to C-terminus: Hexokinase-1 (497 aa).

A helical membrane pass occupies residues 4–24 (ATVGAAVIGAATVCAVAALIV). In terms of domain architecture, Hexokinase spans 35 to 487 (ARAMAILREF…SGIGAALLAA (453 aa)). Positions 90 to 228 (TGDEAGVFYA…GVDMRVSALV (139 aa)) are hexokinase small subdomain. Glycine 104, threonine 105, and asparagine 106 together coordinate ADP. The D-glucose site is built by threonine 194, lysine 195, asparagine 229, and aspartate 230. A hexokinase large subdomain region spans residues 229-476 (NDTVGTLAGG…TSIVFEHSND (248 aa)). An ADP-binding site is contributed by threonine 253. 3 residues coordinate D-glucose: asparagine 256, glutamate 284, and glutamate 315. Glycine 441 contributes to the ADP binding site.

It belongs to the hexokinase family.

Its subcellular location is the plastid. It localises to the chloroplast outer membrane. It carries out the reaction a D-hexose + ATP = a D-hexose 6-phosphate + ADP + H(+). The enzyme catalyses D-fructose + ATP = D-fructose 6-phosphate + ADP + H(+). The catalysed reaction is D-glucose + ATP = D-glucose 6-phosphate + ADP + H(+). It participates in carbohydrate metabolism; hexose metabolism. It functions in the pathway carbohydrate degradation; glycolysis; D-glyceraldehyde 3-phosphate and glycerone phosphate from D-glucose: step 1/4. Functionally, fructose and glucose phosphorylating enzyme. The chain is Hexokinase-1 (HXK1) from Nicotiana tabacum (Common tobacco).